Reading from the N-terminus, the 252-residue chain is uncharacterized protein (252 aa).

The first 25 residues, 1–25, serve as a signal peptide directing secretion; that stretch reads MRKKKFLSRFAFGSLFLLCGTILSA. Residue cysteine 26 is the site of N-palmitoyl cysteine attachment. Cysteine 26 carries S-diacylglycerol cysteine lipidation.

It belongs to the MG439/MG440 family.

The protein resides in the cell membrane. This is an uncharacterized protein from Mycoplasma pneumoniae (strain ATCC 29342 / M129 / Subtype 1) (Mycoplasmoides pneumoniae).